A 515-amino-acid polypeptide reads, in one-letter code: Protein NRT1/ PTR FAMILY 4.1 (515 aa).

The next 12 membrane-spanning stretches (helical) occupy residues 24 to 44 (GIKA…VFLA), 71 to 91 (FVGT…SFLT), 93 to 113 (FAAF…LTLQ), 134 to 154 (VLFT…GSLP), 168 to 188 (LISG…FLAV), 204 to 224 (FTIS…GCPM), 298 to 318 (FLAL…VAQM), 339 to 359 (IPVA…LALY), 381 to 401 (IGYG…VEVK), 413 to 433 (ISVF…MLTV), 461 to 481 (AMGF…TGWL), and 492 to 512 (LFYL…IFWA).

This sequence belongs to the major facilitator superfamily. Proton-dependent oligopeptide transporter (POT/PTR) (TC 2.A.17) family. In terms of tissue distribution, expressed in siliques and flowers.

The protein localises to the membrane. Its function is as follows. Involved in (+) and (-)-abscisic acid transport (ABA) and in gibberellin import. The polypeptide is Protein NRT1/ PTR FAMILY 4.1 (NPF4.1) (Arabidopsis thaliana (Mouse-ear cress)).